Here is a 410-residue protein sequence, read N- to C-terminus: Peptidase T (410 aa).

His78 is a Zn(2+) binding site. Residue Asp80 is part of the active site. Residue Asp140 coordinates Zn(2+). Glu173 functions as the Proton acceptor in the catalytic mechanism. Zn(2+) contacts are provided by Glu174, Asp196, and His379.

The protein belongs to the peptidase M20B family. Zn(2+) is required as a cofactor.

It localises to the cytoplasm. It carries out the reaction Release of the N-terminal residue from a tripeptide.. Functionally, cleaves the N-terminal amino acid of tripeptides. The chain is Peptidase T from Pectobacterium atrosepticum (strain SCRI 1043 / ATCC BAA-672) (Erwinia carotovora subsp. atroseptica).